A 252-amino-acid polypeptide reads, in one-letter code: Adenosylcobinamide-GDP ribazoletransferase (252 aa).

7 helical membrane-spanning segments follow: residues Leu-4–Glu-24, Pro-38–Leu-58, Ile-60–Leu-80, Phe-113–Leu-133, Ile-141–Ile-161, Leu-190–Val-210, and Val-232–Thr-252.

The protein belongs to the CobS family. The cofactor is Mg(2+).

The protein localises to the cell membrane. The catalysed reaction is alpha-ribazole + adenosylcob(III)inamide-GDP = adenosylcob(III)alamin + GMP + H(+). It catalyses the reaction alpha-ribazole 5'-phosphate + adenosylcob(III)inamide-GDP = adenosylcob(III)alamin 5'-phosphate + GMP + H(+). It participates in cofactor biosynthesis; adenosylcobalamin biosynthesis; adenosylcobalamin from cob(II)yrinate a,c-diamide: step 7/7. Joins adenosylcobinamide-GDP and alpha-ribazole to generate adenosylcobalamin (Ado-cobalamin). Also synthesizes adenosylcobalamin 5'-phosphate from adenosylcobinamide-GDP and alpha-ribazole 5'-phosphate. This chain is Adenosylcobinamide-GDP ribazoletransferase, found in Clostridium botulinum (strain Alaska E43 / Type E3).